A 487-amino-acid polypeptide reads, in one-letter code: Probable cobyric acid synthase (487 aa).

The region spanning 246 to 431 (LVRIAVIRLP…LHGLFMVPAA (186 aa)) is the GATase cobBQ-type domain. The active-site Nucleophile is the cysteine 325. Residue histidine 423 is part of the active site.

Belongs to the CobB/CobQ family. CobQ subfamily.

It functions in the pathway cofactor biosynthesis; adenosylcobalamin biosynthesis. In terms of biological role, catalyzes amidations at positions B, D, E, and G on adenosylcobyrinic A,C-diamide. NH(2) groups are provided by glutamine, and one molecule of ATP is hydrogenolyzed for each amidation. The chain is Probable cobyric acid synthase from Methanosphaerula palustris (strain ATCC BAA-1556 / DSM 19958 / E1-9c).